A 187-amino-acid chain; its full sequence is Endoribonuclease YbeY (187 aa).

Zn(2+) is bound by residues H148, H152, and H158.

The protein belongs to the endoribonuclease YbeY family. It depends on Zn(2+) as a cofactor.

It is found in the cytoplasm. Its function is as follows. Single strand-specific metallo-endoribonuclease involved in late-stage 70S ribosome quality control and in maturation of the 3' terminus of the 16S rRNA. In Ralstonia nicotianae (strain ATCC BAA-1114 / GMI1000) (Ralstonia solanacearum), this protein is Endoribonuclease YbeY.